The chain runs to 160 residues: 6,7-dimethyl-8-ribityllumazine synthase (160 aa).

Residues Trp27, 59-61 (AIE), and 81-83 (VVI) contribute to the 5-amino-6-(D-ribitylamino)uracil site. 86 to 87 (QT) is a binding site for (2S)-2-hydroxy-3-oxobutyl phosphate. The Proton donor role is filled by His89. Asn114 serves as a coordination point for 5-amino-6-(D-ribitylamino)uracil. Arg128 contributes to the (2S)-2-hydroxy-3-oxobutyl phosphate binding site.

This sequence belongs to the DMRL synthase family. Homopentamer.

The enzyme catalyses (2S)-2-hydroxy-3-oxobutyl phosphate + 5-amino-6-(D-ribitylamino)uracil = 6,7-dimethyl-8-(1-D-ribityl)lumazine + phosphate + 2 H2O + H(+). Its pathway is cofactor biosynthesis; riboflavin biosynthesis; riboflavin from 2-hydroxy-3-oxobutyl phosphate and 5-amino-6-(D-ribitylamino)uracil: step 1/2. Catalyzes the formation of 6,7-dimethyl-8-ribityllumazine by condensation of 5-amino-6-(D-ribitylamino)uracil with 3,4-dihydroxy-2-butanone 4-phosphate. This is the penultimate step in the biosynthesis of riboflavin. The sequence is that of 6,7-dimethyl-8-ribityllumazine synthase from Mycobacterium avium (strain 104).